A 156-amino-acid polypeptide reads, in one-letter code: Protein-export protein SecB (156 aa).

It belongs to the SecB family. Homotetramer, a dimer of dimers. One homotetramer interacts with 1 SecA dimer.

The protein resides in the cytoplasm. One of the proteins required for the normal export of preproteins out of the cell cytoplasm. It is a molecular chaperone that binds to a subset of precursor proteins, maintaining them in a translocation-competent state. It also specifically binds to its receptor SecA. The sequence is that of Protein-export protein SecB from Paraburkholderia xenovorans (strain LB400).